The sequence spans 788 residues: Cap-specific mRNA (nucleoside-2'-O-)-methyltransferase 1 (788 aa).

The region spanning 25–71 (YSNKAMEMMKKMGYENDKGLGKSNQGRLEPIIAVQQDGRRGFGLKLD) is the G-patch domain. Residues 143 to 147 (KTVFD) and Arg158 each bind substrate. The RrmJ-type SAM-dependent 2'-O-MTase domain maps to 171–384 (IFLNRAAVKM…ERYLVCKYKR (214 aa)). Asn174 contributes to the S-adenosyl-L-methionine binding site. Lys179 is an active-site residue. 215 to 221 (CAGPGGF) is a binding site for S-adenosyl-L-methionine. Asp298 is an active-site residue. 308–310 (NIQ) is a substrate binding site. The Proton acceptor role is filled by Lys338. Position 373 (Asn373) interacts with substrate.

As to quaternary structure, interacts (via C-terminus) with r2d2 (via C-terminus).

The protein resides in the nucleus. Its subcellular location is the cytoplasm. The catalysed reaction is a 5'-end (N(7)-methyl 5'-triphosphoguanosine)-ribonucleoside in mRNA + S-adenosyl-L-methionine = a 5'-end (N(7)-methyl 5'-triphosphoguanosine)-(2'-O-methyl-ribonucleoside) in mRNA + S-adenosyl-L-homocysteine + H(+). Functionally, S-adenosyl-L-methionine-dependent methyltransferase that mediates mRNA cap1 2'-O-ribose methylation to the 5'-cap structure of mRNAs. Methylates the ribose of the first nucleotide of a m(7)GpppG-capped mRNA to produce m(7)GpppNmp (cap1). Positively regulates the Ago2-dependent small RNA pathway, with roles in both siRNA biogenesis and RISC assembly. Involved in facilitating conversion of pre-RISC into holo-RISC, possibly by promoting the unwinding of Ago2-bound siRNA duplexes and thus the retention of the guide strand in holo-RISC. The sequence is that of Cap-specific mRNA (nucleoside-2'-O-)-methyltransferase 1 from Drosophila melanogaster (Fruit fly).